The sequence spans 397 residues: Tryptophan synthase beta chain (397 aa).

Residue lysine 91 is modified to N6-(pyridoxal phosphate)lysine.

This sequence belongs to the TrpB family. In terms of assembly, tetramer of two alpha and two beta chains. Pyridoxal 5'-phosphate serves as cofactor.

The catalysed reaction is (1S,2R)-1-C-(indol-3-yl)glycerol 3-phosphate + L-serine = D-glyceraldehyde 3-phosphate + L-tryptophan + H2O. Its pathway is amino-acid biosynthesis; L-tryptophan biosynthesis; L-tryptophan from chorismate: step 5/5. The beta subunit is responsible for the synthesis of L-tryptophan from indole and L-serine. This Bacillus thuringiensis (strain Al Hakam) protein is Tryptophan synthase beta chain.